A 297-amino-acid chain; its full sequence is Mitochondrial citrate transporter A (297 aa).

3 Solcar repeats span residues 12–91, 102–188, and 199–286; these read PSSL…LKSL, PKTV…LKQM, and LGTA…TMDA. 6 helical membrane passes run 18–31, 61–81, 99–119, 160–180, 192–212, and 251–272; these read IIAGSTAGAVEIAI, SQWYAGCTTLIIGNSLKAGIR, ISGPKTVIAGFGAGFTESLLA, FFQGFVPTTARQAANSATRFS, YVAPGEKLGTASTFALGGIAG, and KDEGIFTFWSGAVPRLARLIMS.

This sequence belongs to the mitochondrial carrier (TC 2.A.29) family.

The protein localises to the mitochondrion inner membrane. The catalysed reaction is citrate(in) + H(+)(in) = citrate(out) + H(+)(out). In terms of biological role, mitochondrial transporter that mediates citrate export from mitochondria to cytoplasm. Both ctpA, ctpB, and ctpD play important roles in citric acid transport across the mitochondrial membrane and function in a redundant manner. This Aspergillus niger (strain ATCC 1015 / CBS 113.46 / FGSC A1144 / LSHB Ac4 / NCTC 3858a / NRRL 328 / USDA 3528.7) protein is Mitochondrial citrate transporter A.